Reading from the N-terminus, the 207-residue chain is Holliday junction branch migration complex subunit RuvA (207 aa).

Positions 1–65 (MYDYIRGILT…ETEHVLYGFS (65 aa)) are domain I. The segment at 66–144 (SRRERECFRM…DLLPLDSKAI (79 aa)) is domain II. The tract at residues 145–155 (ASWESVKPSCM) is flexible linker. The domain III stretch occupies residues 155 to 207 (MDEGIQALAALGYSKPSAERMIAEAMSELPENASLAEILPIALKKNLQGLNKS).

The protein belongs to the RuvA family. In terms of assembly, homotetramer. Forms an RuvA(8)-RuvB(12)-Holliday junction (HJ) complex. HJ DNA is sandwiched between 2 RuvA tetramers; dsDNA enters through RuvA and exits via RuvB. An RuvB hexamer assembles on each DNA strand where it exits the tetramer. Each RuvB hexamer is contacted by two RuvA subunits (via domain III) on 2 adjacent RuvB subunits; this complex drives branch migration. In the full resolvosome a probable DNA-RuvA(4)-RuvB(12)-RuvC(2) complex forms which resolves the HJ.

It localises to the cytoplasm. In terms of biological role, the RuvA-RuvB-RuvC complex processes Holliday junction (HJ) DNA during genetic recombination and DNA repair, while the RuvA-RuvB complex plays an important role in the rescue of blocked DNA replication forks via replication fork reversal (RFR). RuvA specifically binds to HJ cruciform DNA, conferring on it an open structure. The RuvB hexamer acts as an ATP-dependent pump, pulling dsDNA into and through the RuvAB complex. HJ branch migration allows RuvC to scan DNA until it finds its consensus sequence, where it cleaves and resolves the cruciform DNA. This chain is Holliday junction branch migration complex subunit RuvA, found in Chlamydia caviae (strain ATCC VR-813 / DSM 19441 / 03DC25 / GPIC) (Chlamydophila caviae).